Here is a 440-residue protein sequence, read N- to C-terminus: 23S rRNA (uracil(1939)-C(5))-methyltransferase RlmD (440 aa).

The region spanning 6 to 64 (PIHNAQPEQVFIESLDTEGRGIARVEGKVLFVDGALPGERVWARRTQNHKSFDRAELLQ) is the TRAM domain. The [4Fe-4S] cluster site is built by Cys-77, Cys-83, Cys-86, and Cys-164. Residues Gln-273, Phe-302, Asn-307, Glu-323, Asp-351, and Asp-372 each coordinate S-adenosyl-L-methionine. Catalysis depends on Cys-397, which acts as the Nucleophile.

The protein belongs to the class I-like SAM-binding methyltransferase superfamily. RNA M5U methyltransferase family. RlmD subfamily.

It catalyses the reaction uridine(1939) in 23S rRNA + S-adenosyl-L-methionine = 5-methyluridine(1939) in 23S rRNA + S-adenosyl-L-homocysteine + H(+). In terms of biological role, catalyzes the formation of 5-methyl-uridine at position 1939 (m5U1939) in 23S rRNA. This Acidithiobacillus ferrooxidans (strain ATCC 23270 / DSM 14882 / CIP 104768 / NCIMB 8455) (Ferrobacillus ferrooxidans (strain ATCC 23270)) protein is 23S rRNA (uracil(1939)-C(5))-methyltransferase RlmD.